Consider the following 543-residue polypeptide: Aspartate/alanine antiporter (543 aa).

Helical transmembrane passes span 4–26, 33–55, 88–110, 117–139, 159–178, 362–381, 385–407, 428–450, 455–477, and 520–542; these read IGNFLVGTPVFTIFICLALGYLL, SFTLGATVGVLIVALLIGQLGVF, FGAKIVYATLIFLVSAFIVAYAC, GPGIAAGIIAGGLTQSAVIGSSL, IPIVYTLTYVFGTIGVLIFL, IINYSWFALGIALSAALGIV, VSGVPIALGGGTASLIVGLVQSI, SIGLNLFIATVGLSAAKTFISAI, ISVLLIGAVISILPHIITFVICY, and VAPAYAIGNIFLTLMGPIFIVLL.

Belongs to the AAE transporter (TC 2.A.81) family.

Its subcellular location is the cell membrane. In terms of biological role, catalyzes the electrogenic exchange of aspartate with alanine. This Tetragenococcus halophilus (Pediococcus halophilus) protein is Aspartate/alanine antiporter (aspT).